Consider the following 291-residue polypeptide: Deaminated glutathione amidase (291 aa).

The region spanning 13-268 is the CN hydrolase domain; it reads KRIGLGQITS…NDIAFVDIDL (256 aa). Residue Glu52 is the Proton acceptor of the active site. Lys130 acts as the Proton donor in catalysis. The active-site Nucleophile is Cys172.

This sequence belongs to the carbon-nitrogen hydrolase superfamily. NIT1/NIT2 family.

It carries out the reaction N-(4-oxoglutaryl)-L-cysteinylglycine + H2O = L-cysteinylglycine + 2-oxoglutarate. Functionally, catalyzes the hydrolysis of the amide bond in N-(4-oxoglutarate)-L-cysteinylglycine (deaminated glutathione), a metabolite repair reaction to dispose of the harmful deaminated glutathione. In Dictyostelium discoideum (Social amoeba), this protein is Deaminated glutathione amidase (nit1-1).